A 467-amino-acid polypeptide reads, in one-letter code: Venom prothrombin activator omicarin-C catalytic subunit (467 aa).

An N-terminal signal peptide occupies residues 1-20 (MAPQLLLCLILTFLWSLPEA). Residues 21–40 (ESNVFLKSKVANRFLQRTKR) constitute a propeptide that is removed on maturation. Residues 41-86 (ANSLFEEFRSGNIERECIEERCSKEEAREVFEDDEKTETFWNVYVD) form the Gla domain. Residues glutamate 46, glutamate 47, glutamate 54, glutamate 56, glutamate 59, glutamate 60, glutamate 65, glutamate 66, glutamate 69, glutamate 72, and glutamate 75 each carry the 4-carboxyglutamate modification. Cysteine 57 and cysteine 62 form a disulfide bridge. Residues 86–122 (DGDQCSSNPCHYRGTCKDGIGSYTCTCLFGYEGKNCE) enclose the EGF-like 1; calcium-binding domain. 11 disulfides stabilise this stretch: cysteine 90–cysteine 101, cysteine 95–cysteine 110, cysteine 112–cysteine 121, cysteine 129–cysteine 140, cysteine 136–cysteine 149, cysteine 151–cysteine 164, cysteine 172–cysteine 329, cysteine 216–cysteine 221, cysteine 236–cysteine 252, cysteine 377–cysteine 391, and cysteine 402–cysteine 430. A glycan (O-linked (Hex...) serine) is linked at serine 92. The EGF-like 2 domain maps to 129–164 (CRVDNGNCWHFCKPVQNDIQCSCAEGYLLGEDGHSC). The propeptide at 182-209 (REASLPDFVQSQNATLLKKSDNPSPDIR) is activation peptide. Positions 210-454 (IVNGMDCKLG…FILWIKRIMR (245 aa)) constitute a Peptidase S1 domain. The active-site Charge relay system is the histidine 251. An N-linked (GlcNAc...) asparagine glycan is attached at asparagine 254. Catalysis depends on aspartate 309, which acts as the Charge relay system. The Charge relay system role is filled by serine 406.

It belongs to the peptidase S1 family. Snake venom subfamily. In terms of assembly, heterodimer of a light and a heavy chains; disulfide-linked. Is associated with omicarin-C non-catalytic subunit (AC Q58L90) in a non-covalent manner. Gamma-carboxyglutamate residues are formed by vitamin K dependent carboxylation. These residues are essential for the binding of calcium. In terms of tissue distribution, expressed by the venom gland.

Its subcellular location is the secreted. It catalyses the reaction Selective cleavage of Arg-|-Thr and then Arg-|-Ile bonds in prothrombin to form thrombin.. With respect to regulation, activated by calcium and negatively charged phospholipids. Functionally, snake prothrombin activator that attacks the hemostatic system of prey. This catalytic subunit is functionally similar to blood coagulation factor Xa. It requires a non-catalytic subunit present in the venom, which is similar to coagulation factor Va, to be fully active. The chain is Venom prothrombin activator omicarin-C catalytic subunit from Oxyuranus microlepidotus (Inland taipan).